The following is a 293-amino-acid chain: Iron-sulfur cluster transfer protein Nubpl (293 aa).

The CXXC motif probably involved in coordinating iron-sulfur cluster binding stretch occupies residues 214 to 217 (CQNC).

The protein belongs to the Mrp/NBP35 ATP-binding proteins family. As to quaternary structure, homodimer; dimerization is not reliant on iron-sulfur cluster binding. The cofactor is [4Fe-4S] cluster.

The protein localises to the mitochondrion membrane. Iron-sulfur cluster transfer protein involved in the assembly of the mitochondrial membrane respiratory chain NADH dehydrogenase (Complex I). May deliver one or more Fe-S clusters to complex I subunits. Alleviates pausing in mitochondrial DNA (mtDNA) replication at slow zone 2. May be involved in mtDNA-helicase-mediated mtDNA unwinding and replication by transferring iron-sulfur clusters. The polypeptide is Iron-sulfur cluster transfer protein Nubpl (Drosophila melanogaster (Fruit fly)).